The primary structure comprises 436 residues: T-box transcription factor T (436 aa).

A DNA-binding region (T-box) is located at residues 51–219 (LWLRFKELTN…YNPFAKAFLD (169 aa)).

Monomer. Binds DNA as a monomer.

It is found in the nucleus. Its function is as follows. Involved in the transcriptional regulation of genes required for mesoderm formation and differentiation. Binds to a palindromic T site 5'-TTCACACCTAGGTGTGAA-3' DNA sequence and activates gene transcription when bound to such a site. This is T-box transcription factor T from Mus musculus (Mouse).